We begin with the raw amino-acid sequence, 243 residues long: MISLLQMKFHALLLLLSKVWTCICFMFNRQVRAFIQYQPVKYELFPLSPVSRHRLSLVQRKTLVLDLDETLIHSHHNAMPRNTVKPGTPHDFTVKVTIDRNPVRFFVHKRPHVDYFLDVVSQWYDLVVFTASMEIYGAAVADKLDNGRNILRRRYYRQHCTPDYGSYTKDLSAICSDLNRIFIIDNSPGAYRCFPNNAIPIKSWFSDPMDTALLSLLPMLDALRFTNDVRSVLSRNLHLHRLW.

Residues Ala-11–Phe-27 traverse the membrane as a helical segment. The FCP1 homology domain maps to Ser-56–Leu-223.

This sequence belongs to the dullard family.

The protein localises to the membrane. It catalyses the reaction O-phospho-L-seryl-[protein] + H2O = L-seryl-[protein] + phosphate. The catalysed reaction is O-phospho-L-threonyl-[protein] + H2O = L-threonyl-[protein] + phosphate. Serine/threonine protein phosphatase that may dephosphorylate and activate lipin-like phosphatases. Lipins are phosphatidate phosphatases that catalyze the conversion of phosphatidic acid to diacylglycerol and control the metabolism of fatty acids at different levels. May indirectly modulate the lipid composition of nuclear and/or endoplasmic reticulum membranes and be required for proper nuclear membrane morphology and/or dynamics. May also indirectly regulate the production of lipid droplets and triacylglycerol. This Drosophila pseudoobscura pseudoobscura (Fruit fly) protein is CTD nuclear envelope phosphatase 1 homolog (l(1)G0269).